The chain runs to 666 residues: Probable cytochrome c oxidase subunit 1 (666 aa).

A run of 2 helical transmembrane segments spans residues 16–36 (IPLIAGAVVLVAILAVLVWVV) and 57–77 (IGVMYILLASIMLLRGGSDAI). His-105 provides a ligand contact to heme b. The next 13 membrane-spanning stretches (helical) occupy residues 108-128 (IMIFFVAMPFVIGLMNLVVPL), 142-162 (SVGFWLTATGALLVNLSLVIG), 192-212 (SLQISGVGTLVAGINLVTTVL), 234-254 (SNLLIVAAFPILTATLAMLLL), 277-297 (LIWAWGHPEVYILVLPAFGIF), 315-335 (MVLATMAICVISFMVWLHHFF), 346-366 (IFGIASMIIAVPTGVKIYNWL), 380-400 (MLWAVGFMVTFIIGGLTGVLV), 413-433 (MFLVAHFHNVIIGGVLFGAFA), 456-476 (FWFTFLGFYVTFMPLYIAGML), 493-513 (WMLVAAAGMAVLTIGVICQIM), 591-611 (SPTGFICAFFATIMGFALIWH), and 612-632 (IWWMVILGGIGAFATFVVFAW). Cu cation contacts are provided by His-283, Tyr-287, His-332, and His-333. The 1'-histidyl-3'-tyrosine (His-Tyr) cross-link spans 283–287 (HPEVY). Heme b contacts are provided by His-418 and His-420.

The protein belongs to the heme-copper respiratory oxidase family.

It localises to the cell membrane. It carries out the reaction 4 Fe(II)-[cytochrome c] + O2 + 8 H(+)(in) = 4 Fe(III)-[cytochrome c] + 2 H2O + 4 H(+)(out). Its pathway is energy metabolism; oxidative phosphorylation. The sequence is that of Probable cytochrome c oxidase subunit 1 from Bradyrhizobium diazoefficiens (strain JCM 10833 / BCRC 13528 / IAM 13628 / NBRC 14792 / USDA 110).